A 182-amino-acid chain; its full sequence is Small ribosomal subunit protein uS5 (182 aa).

The region spanning 16–79 (FVDRLVHINR…EAAKRGMIYV (64 aa)) is the S5 DRBM domain.

This sequence belongs to the universal ribosomal protein uS5 family. As to quaternary structure, part of the 30S ribosomal subunit. Contacts proteins S4 and S8.

Functionally, with S4 and S12 plays an important role in translational accuracy. In terms of biological role, located at the back of the 30S subunit body where it stabilizes the conformation of the head with respect to the body. The sequence is that of Small ribosomal subunit protein uS5 from Bartonella quintana (strain Toulouse) (Rochalimaea quintana).